We begin with the raw amino-acid sequence, 701 residues long: Elongation factor G 2 (701 aa).

The tr-type G domain occupies 8 to 291; the sequence is ERYRNIGISA…AVIDYLPSPA (284 aa). Residues 17-24, 88-92, and 142-145 contribute to the GTP site; these read AHIDAGKT, DTPGH, and NKMD.

This sequence belongs to the TRAFAC class translation factor GTPase superfamily. Classic translation factor GTPase family. EF-G/EF-2 subfamily.

It localises to the cytoplasm. In terms of biological role, catalyzes the GTP-dependent ribosomal translocation step during translation elongation. During this step, the ribosome changes from the pre-translocational (PRE) to the post-translocational (POST) state as the newly formed A-site-bound peptidyl-tRNA and P-site-bound deacylated tRNA move to the P and E sites, respectively. Catalyzes the coordinated movement of the two tRNA molecules, the mRNA and conformational changes in the ribosome. This chain is Elongation factor G 2, found in Burkholderia lata (strain ATCC 17760 / DSM 23089 / LMG 22485 / NCIMB 9086 / R18194 / 383).